The sequence spans 805 residues: Cell division cycle 5-related protein (805 aa).

HTH myb-type domains lie at 1-58 (MPRI…DPSI) and 59-108 (KKTE…DQAQ). DNA-binding regions (H-T-H motif) lie at residues 31 to 54 (WSRIASLLHRKSAKQCKARWYEWL) and 82 to 104 (WRTIAPLIGRTAAQCLERYEYLL). The segment covering 108 to 127 (QAKEGDKDEGDDPRKLRPGE) has biased composition (basic and acidic residues). Disordered stretches follow at residues 108–143 (QAKEGDKDEGDDPRKLRPGEIDPNPETKPARPDPID), 246–293 (HLEG…HVKK), 409–442 (LSTPYRTPGEGSGSTPRQGMTPRGAIGTPSQRSV), and 530–556 (LERRRRSQAVQRELPRPSNVNTSVLRP). Residues 142–193 (IDMDEDELEMLSEARARLANTQGKKAKRKAREKQLEEARRLAALQKRRELRA) are a coiled coil. Basic and acidic residues predominate over residues 246–274 (HLEGKMRDEIEQQERKKDKERMKKKKESD). Coiled-coil stretches lie at residues 511–542 (EDAADIDERALALRAKQEELERRRRSQAVQRE) and 678–804 (YTRA…SKLQ).

The protein belongs to the CEF1 family. Component of the precatalytic, catalytic and postcatalytic spliceosome complexes.

It is found in the nucleus. The protein resides in the cytoplasm. DNA-binding protein involved in cell cycle control. May act as a transcription activator. Plays a role in pre-mRNA splicing as core component of precatalytic, catalytic and postcatalytic spliceosomal complexes. May also play a role in the response to DNA damage (DDR). In Nematostella vectensis (Starlet sea anemone), this protein is Cell division cycle 5-related protein (cdc5l).